The sequence spans 554 residues: Potassium/proton antiporter CemA (554 aa).

Residues 50-70 (SLFVVLFIPFFINIFTKIYVF) traverse the membrane as a helical segment. The interval 113 to 410 (KTENFFPEKP…VPYNFNKNTE (298 aa)) is insert. 3 helical membrane passes run 429-449 (ISAI…LFLL), 479-499 (MLLF…EVIF), and 514-534 (IIFL…KYWI).

This sequence belongs to the CemA family.

It localises to the plastid. The protein localises to the chloroplast inner membrane. The catalysed reaction is K(+)(in) + H(+)(out) = K(+)(out) + H(+)(in). Its function is as follows. Contributes to K(+)/H(+) antiport activity by supporting proton efflux to control proton extrusion and homeostasis in chloroplasts in a light-dependent manner to modulate photosynthesis. Prevents excessive induction of non-photochemical quenching (NPQ) under continuous-light conditions. Indirectly promotes efficient inorganic carbon uptake into chloroplasts. The polypeptide is Potassium/proton antiporter CemA (Stigeoclonium helveticum (Green alga)).